Here is a 614-residue protein sequence, read N- to C-terminus: Zinc finger protein 276 (614 aa).

The tract at residues Met-1–Ala-50 is disordered. One can recognise a ZAD domain in the interval Gly-77–Gly-163. Zn(2+) is bound by residues Cys-79, Cys-82, Cys-136, and Cys-139. Residues Ala-268–Lys-420 form a disordered region. A compositionally biased stretch (acidic residues) spans Ser-357–Glu-369. Residues Tyr-386–Arg-408 are compositionally biased toward basic and acidic residues. Over residues Ile-409–Lys-420 the composition is skewed to basic residues. 5 consecutive C2H2-type zinc fingers follow at residues Tyr-434–His-458, Arg-465–His-490, Tyr-496–His-518, Leu-524–His-546, and Phe-554–His-577. The tract at residues Gln-583–Thr-614 is disordered. The span at Ala-591–Pro-600 shows a compositional bias: pro residues.

The protein localises to the nucleus. The protein resides in the chromosome. Its subcellular location is the centromere. It is found in the kinetochore. Functionally, may be involved in transcriptional regulation. The polypeptide is Zinc finger protein 276 (ZNF276) (Homo sapiens (Human)).